A 1162-amino-acid chain; its full sequence is Transcription termination factor 2 (1162 aa).

Residues Cys-6, His-9, Cys-32, and Cys-37 each coordinate Zn(2+). Residues 6–46 (CPEHGTFCFLKTGVRDGPNKGKSFYVCRADTCSFVRATDIP) form a GRF-type zinc finger. Disordered stretches follow at residues 97 to 116 (PDSK…ETFH), 142 to 358 (IKGE…EEDD), 388 to 407 (DRSV…KVEP), and 459 to 503 (LSPE…TQPV). Polar residues predominate over residues 105-116 (SNKSQHASETFH). Residues 142-178 (IKGEGEEKKADKKQREKGDQLFDQKKEQKPEMMEKDL) are compositionally biased toward basic and acidic residues. Lys-143 is covalently cross-linked (Glycyl lysine isopeptide (Lys-Gly) (interchain with G-Cter in SUMO2)). A compositionally biased stretch (polar residues) spans 219 to 232 (IKSQQCQGNELTRP). The span at 233-245 (SASSQEKSSGKSQ) shows a compositional bias: low complexity. Residues 246–258 (DVQRESEPLREKV) show a composition bias toward basic and acidic residues. A compositionally biased stretch (polar residues) spans 261-274 (LLPQNVHSHNSISK). A compositionally biased stretch (low complexity) spans 323–338 (PAPGGPAAQAAPAAPG). The segment covering 459–485 (LSPEQGTNEKSNSQVPQQSHFTKTTTG) has biased composition (polar residues). Ser-460 bears the Phosphoserine mark. The region spanning 583–786 (WRESQKPQGG…YSLLKFLRCS (204 aa)) is the Helicase ATP-binding domain. 596–603 (DDMGLGKT) contacts ATP. Positions 737 to 740 (DEAH) match the DEAH box motif. Residues 871–890 (KRHESRGNQSGRSPNNPFSR) form a disordered region. A compositionally biased stretch (polar residues) spans 877–888 (GNQSGRSPNNPF). A phosphoserine mark is found at Ser-883 and Ser-908. The Helicase C-terminal domain maps to 995–1157 (SLLAELEAIQ…VTKLTLADLR (163 aa)).

Belongs to the SNF2/RAD54 helicase family. As to quaternary structure, interacts with CDC5L. Part of the spliceosome.

Its subcellular location is the cytoplasm. The protein resides in the nucleus. DsDNA-dependent ATPase which acts as a transcription termination factor by coupling ATP hydrolysis with removal of RNA polymerase II from the DNA template. May contribute to mitotic transcription repression. May also be involved in pre-mRNA splicing. The sequence is that of Transcription termination factor 2 (TTF2) from Homo sapiens (Human).